Reading from the N-terminus, the 322-residue chain is Crystallin J1B (322 aa).

Belongs to the ADP-ribosylglycohydrolase family. J1 crystallin subfamily. In terms of tissue distribution, expressed in the rhopalia. Present in both the large and small eyes.

This chain is Crystallin J1B, found in Tripedalia cystophora (Jellyfish).